We begin with the raw amino-acid sequence, 219 residues long: Peroxiredoxin-5, mitochondrial (219 aa).

Residues 1–57 (MRLGWLRVLGCRPGSVVSRATIVEGASTTAAGTRGCLEGILEWTFGGVRGFRSAAVA) constitute a mitochondrion transit peptide. The 159-residue stretch at 61 to 219 (IKVGDAIPSV…SLAPNILSQL (159 aa)) folds into the Thioredoxin domain. The residue at position 80 (lysine 80) is an N6-acetyllysine. An N6-acetyllysine; alternate modification is found at lysine 88. At lysine 88 the chain carries N6-succinyllysine; alternate. The active-site Cysteine sulfenic acid (-SOH) intermediate is the cysteine 105. Residue cysteine 105 is the site of S-palmitoyl cysteine attachment. Cysteine 105 and cysteine 209 form a disulfide bridge. N6-succinyllysine is present on lysine 121. Serine 187 carries the phosphoserine modification. A Microbody targeting signal motif is present at residues 217 to 219 (SQL).

It belongs to the peroxiredoxin family. Prx5 subfamily. Monomer. Post-translationally, S-palmitoylated. Palmitoylation occurs on the active site, inhibiting its reactivity; therefore PRDX5 palmitoylation status determines its antioxidant capacity. S-palmitoylated. Depalmitoylated by ABHD10.

The protein localises to the mitochondrion. It is found in the cytoplasm. The protein resides in the peroxisome matrix. The catalysed reaction is a hydroperoxide + [thioredoxin]-dithiol = an alcohol + [thioredoxin]-disulfide + H2O. Its function is as follows. Thiol-specific peroxidase that catalyzes the reduction of hydrogen peroxide and organic hydroperoxides to water and alcohols, respectively. Plays a role in cell protection against oxidative stress by detoxifying peroxides and as sensor of hydrogen peroxide-mediated signaling events. In Bos taurus (Bovine), this protein is Peroxiredoxin-5, mitochondrial (PRDX5).